A 54-amino-acid chain; its full sequence is UPF0391 membrane protein msr3702 (54 aa).

The next 2 helical transmembrane spans lie at 4-24 (WALV…GGIA) and 30-50 (IAQI…LAGL).

The protein belongs to the UPF0391 family.

The protein localises to the cell membrane. The protein is UPF0391 membrane protein msr3702 of Mesorhizobium japonicum (strain LMG 29417 / CECT 9101 / MAFF 303099) (Mesorhizobium loti (strain MAFF 303099)).